The primary structure comprises 158 residues: Non-specific lipid transfer protein GPI-anchored 29 (158 aa).

An N-terminal signal peptide occupies residues Met-1–Gly-24. 4 disulfides stabilise this stretch: Cys-28–Cys-71, Cys-38–Cys-55, Cys-56–Cys-95, and Cys-69–Cys-105. N-linked (GlcNAc...) asparagine glycosylation occurs at Asn-84. A lipid anchor (GPI-anchor amidated serine) is attached at Ser-134. A propeptide spans Lys-135–Ile-158 (removed in mature form).

The protein belongs to the plant LTP family. As to expression, confined to the ovaries of the inflorescence.

Its subcellular location is the secreted. The protein resides in the cell membrane. Functionally, probable lipid transfer protein. In Arabidopsis thaliana (Mouse-ear cress), this protein is Non-specific lipid transfer protein GPI-anchored 29.